Consider the following 370-residue polypeptide: MSFDPQKFVDEISPQLKEIVDGRAIAAVSGGVDSTTAAVLSYKILGDKVIPVMIDTGFLRENEAENVKNMLKDLMPLQVIDEREKFISSLEGMSDAEEKRKKFRQLFYDTLSRIVKEFNAKYLIQGTIAADWVETQGGIKTQHNVLVQLGIDTEKEWGFKVVEPLADLYKDEVRALAKYLGLPRDIYNRQPFPGPGLLVRVVGKLTREKLEILRKVTTTVEKNLSELNLSQYFAVIFDSAAEYNKELSNEVGCDVKVYKTLATGVKGDVRAYGNIAGIECRKDYESLREIMEKLTSYNITHVVVKIKDKNPEGIYTIGIRAVNTQDFMTADFAKINWNILEKIANEINDKKIKEVVYDITTKPPATIEYE.

One can recognise a GMPS ATP-PPase domain in the interval 3 to 189 (FDPQKFVDEI…LGLPRDIYNR (187 aa)). 29-35 (SGGVDST) contacts ATP.

In terms of assembly, heterodimer composed of a glutamine amidotransferase subunit (A) and a GMP-binding subunit (B).

It carries out the reaction XMP + L-glutamine + ATP + H2O = GMP + L-glutamate + AMP + diphosphate + 2 H(+). Its pathway is purine metabolism; GMP biosynthesis; GMP from XMP (L-Gln route): step 1/1. Catalyzes the synthesis of GMP from XMP. In Sulfurisphaera tokodaii (strain DSM 16993 / JCM 10545 / NBRC 100140 / 7) (Sulfolobus tokodaii), this protein is GMP synthase [glutamine-hydrolyzing] subunit B (guaAB).